Consider the following 180-residue polypeptide: UPF0134 protein MPN_368 (180 aa).

The protein belongs to the UPF0134 family.

This chain is UPF0134 protein MPN_368, found in Mycoplasma pneumoniae (strain ATCC 29342 / M129 / Subtype 1) (Mycoplasmoides pneumoniae).